The primary structure comprises 176 residues: Shikimate kinase (176 aa).

14–19 (GAGKSS) contributes to the ATP binding site. Residue Ser18 participates in Mg(2+) binding. Residues Asp36, Arg60, and Gly82 each coordinate substrate. Arg120 is an ATP binding site. Arg138 lines the substrate pocket.

This sequence belongs to the shikimate kinase family. In terms of assembly, monomer. The cofactor is Mg(2+).

Its subcellular location is the cytoplasm. The catalysed reaction is shikimate + ATP = 3-phosphoshikimate + ADP + H(+). Its pathway is metabolic intermediate biosynthesis; chorismate biosynthesis; chorismate from D-erythrose 4-phosphate and phosphoenolpyruvate: step 5/7. Its function is as follows. Catalyzes the specific phosphorylation of the 3-hydroxyl group of shikimic acid using ATP as a cosubstrate. The sequence is that of Shikimate kinase from Dehalococcoides mccartyi (strain ATCC BAA-2100 / JCM 16839 / KCTC 5957 / BAV1).